The sequence spans 216 residues: Imidazoleglycerol-phosphate dehydratase (216 aa).

Belongs to the imidazoleglycerol-phosphate dehydratase family.

It localises to the cytoplasm. The catalysed reaction is D-erythro-1-(imidazol-4-yl)glycerol 3-phosphate = 3-(imidazol-4-yl)-2-oxopropyl phosphate + H2O. Its pathway is amino-acid biosynthesis; L-histidine biosynthesis; L-histidine from 5-phospho-alpha-D-ribose 1-diphosphate: step 6/9. The polypeptide is Imidazoleglycerol-phosphate dehydratase (Nocardia farcinica (strain IFM 10152)).